A 717-amino-acid polypeptide reads, in one-letter code: HHIP-like protein 2 (717 aa).

The signal sequence occupies residues 1-40; the sequence is MLGKHTSPHTVPGHRAPWLSPGIFCLGLPFLLGWVGLLQG. Cystine bridges form between Cys203-Cys545, Cys207-Cys551, Cys423-Cys441, and Cys508-Cys607. The tract at residues 642–717 is disordered; it reads ARKASNATFT…MRQAAGRSHP (76 aa). Positions 646–662 are enriched in polar residues; that stretch reads SNATFTSSSDRVASQKG. An N-linked (GlcNAc...) asparagine glycan is attached at Asn647. Over residues 672-687 the composition is skewed to basic residues; the sequence is SSKKTFRRPGTKKKSR.

This sequence belongs to the HHIP family.

The protein resides in the secreted. The protein is HHIP-like protein 2 (Hhipl2) of Mus musculus (Mouse).